The sequence spans 245 residues: 2,3-bisphosphoglycerate-dependent phosphoglycerate mutase (245 aa).

Residues 8–15 (RHGQSLWN), 21–22 (TG), Arg60, 87–90 (ERHY), Lys98, 114–115 (RR), and 183–184 (GN) each bind substrate. The active-site Tele-phosphohistidine intermediate is His9. Glu87 functions as the Proton donor/acceptor in the catalytic mechanism.

It belongs to the phosphoglycerate mutase family. BPG-dependent PGAM subfamily.

The catalysed reaction is (2R)-2-phosphoglycerate = (2R)-3-phosphoglycerate. The protein operates within carbohydrate degradation; glycolysis; pyruvate from D-glyceraldehyde 3-phosphate: step 3/5. Catalyzes the interconversion of 2-phosphoglycerate and 3-phosphoglycerate. This chain is 2,3-bisphosphoglycerate-dependent phosphoglycerate mutase, found in Bacillus cereus (strain ZK / E33L).